Reading from the N-terminus, the 327-residue chain is Metapyrocatechase (327 aa).

2 VOC domains span residues 14–126 and 156–276; these read QLAH…IFFE and RLDH…LFGD. Positions 159, 221, and 272 each coordinate Fe cation.

This sequence belongs to the extradiol ring-cleavage dioxygenase family. The cofactor is Fe(2+).

The catalysed reaction is catechol + O2 = (2Z,4E)-2-hydroxy-6-oxohexa-2,4-dienoate + H(+). In Geobacillus stearothermophilus (Bacillus stearothermophilus), this protein is Metapyrocatechase (pheB).